A 257-amino-acid chain; its full sequence is Beta-fibrinogenase mucrofibrase-1 (257 aa).

The N-terminal stretch at 1–18 is a signal peptide; sequence MVLIRVLANLLILQLSYA. Positions 19–24 are excised as a propeptide; the sequence is QKSSEL. Residues 25–248 enclose the Peptidase S1 domain; the sequence is VIGGDECNIN…HLDWIKGIIA (224 aa). Disulfide bonds link Cys-31/Cys-162, Cys-49/Cys-65, Cys-97/Cys-255, Cys-141/Cys-209, Cys-173/Cys-188, and Cys-199/Cys-224. Catalysis depends on charge relay system residues His-64 and Asp-109. Ser-203 (charge relay system) is an active-site residue.

This sequence belongs to the peptidase S1 family. Snake venom subfamily. In terms of assembly, monomer. As to expression, expressed by the venom gland.

The protein localises to the secreted. In terms of biological role, snake venom serine protease with strong beta-fibrinogenolytic activities, angiotensin I (AGT)-degrading activities and strong kallikrein-like activities in vitro, releasing bradykinin from kininogen (KNG1). Intravenous injection strongly lowers blood pressure in experimental rats, which may be explained by the action on angiotensin I and kininogen. The protein is Beta-fibrinogenase mucrofibrase-1 of Protobothrops mucrosquamatus (Taiwan habu).